A 124-amino-acid chain; its full sequence is Small ribosomal subunit protein uS13 (124 aa).

Residues 93-117 (KNLPVRGQRTRTNARTRKGPRKTVA) show a composition bias toward basic residues. The interval 93-124 (KNLPVRGQRTRTNARTRKGPRKTVANKKIESK) is disordered.

The protein belongs to the universal ribosomal protein uS13 family. As to quaternary structure, part of the 30S ribosomal subunit. Forms a loose heterodimer with protein S19. Forms two bridges to the 50S subunit in the 70S ribosome.

Located at the top of the head of the 30S subunit, it contacts several helices of the 16S rRNA. In the 70S ribosome it contacts the 23S rRNA (bridge B1a) and protein L5 of the 50S subunit (bridge B1b), connecting the 2 subunits; these bridges are implicated in subunit movement. Contacts the tRNAs in the A and P-sites. The protein is Small ribosomal subunit protein uS13 of Mycoplasma genitalium (strain ATCC 33530 / DSM 19775 / NCTC 10195 / G37) (Mycoplasmoides genitalium).